The chain runs to 622 residues: Iron transport multicopper oxidase fio1 (622 aa).

An N-terminal signal peptide occupies residues 1 to 22; it reads MNKFFSFPILGLLLTCVRFVVA. The Extracellular segment spans residues 23–553; it reads KERLFEWNVT…GEMPAGWTSK (531 aa). N-linked (GlcNAc...) asparagine glycosylation is found at Asn-30 and Asn-79. 2 Plastocyanin-like domains span residues 49 to 147 and 194 to 304; these read IGVN…FIIN and TGLF…LSYN. Cu cation is bound by residues His-85 and His-87. 2 N-linked (GlcNAc...) asparagine glycosylation sites follow: Asn-117 and Asn-123. Cu cation is bound by residues His-129 and His-131. Residues Asn-198, Asn-202, Asn-234, Asn-269, Asn-296, Asn-338, Asn-360, and Asn-376 are each glycosylated (N-linked (GlcNAc...) asparagine). Residues 386-498 enclose the Plastocyanin-like 3 domain; the sequence is EPVTYGPYTN…SGLLATFIEA (113 aa). Residues His-417, His-420, His-422, His-480, Cys-481, His-482, and His-486 each coordinate Cu cation. Residue Asn-532 is glycosylated (N-linked (GlcNAc...) asparagine). The helical transmembrane segment at 554 to 574 threads the bilayer; sequence AIGTMAACVISACIGMGSIIF. Topologically, residues 575 to 622 are cytoplasmic; the sequence is YGASIHPVPTEELDENDDLQEAALENAAMFLDTDKAVEKVVEGKDEIK.

Belongs to the multicopper oxidase family. Cu cation serves as cofactor.

It is found in the cell membrane. Could be an iron transport multicopper oxidase, which is required for Fe(2+) high affinity uptake. May be required to oxidize Fe(2+) and release it from the transporter. Essential component of copper-dependent iron transport. The sequence is that of Iron transport multicopper oxidase fio1 (fio1) from Schizosaccharomyces pombe (strain 972 / ATCC 24843) (Fission yeast).